A 708-amino-acid polypeptide reads, in one-letter code: F-box only protein 43 (708 aa).

A disordered region spans residues 35–55; that stretch reads MSQRHSGQAGTEAGNGADSPP. Phosphoserine is present on Ser-76. Thr-234 is modified (phosphothreonine). Residues 320–426 form a disordered region; the sequence is PSPEVRGSIS…ISEGQLSSDE (107 aa). Residues 327–337 show a composition bias toward polar residues; the sequence is SISTPEDSGFN. A Phosphoserine modification is found at Ser-334. Residues 374–385 show a composition bias toward basic residues; the sequence is KTRHLGRSRRLS. Residues 399–411 are compositionally biased toward basic and acidic residues; sequence EKQIVHPDSEKRA. An F-box domain is found at 490–547; it reads MGIEKLDILTELKYRNLKHILAMVLESLTAESLCSVWKVSRNWREIVVQDKNANRRRK. The segment at 636-684 adopts a ZBR-type zinc-finger fold; the sequence is ALKPCPRCQSPAKYQPYKKRGLCSRTACGFDFCVLCLCAYHGSEECSRG. Residues Cys-640, Cys-643, Cys-658, Cys-663, Cys-668, Cys-671, His-676, and Cys-681 each coordinate Zn(2+). The disordered stretch occupies residues 682 to 708; it reads SRGAAKPRNRKDALPGSAQSKRNLKRL.

In terms of assembly, part of a SCF (SKP1-cullin-F-box) protein ligase complex. According to PubMed:34595750 interaction with SKP1 does not occur. Interacts with ANAPC2; the interaction is direct, ANAPC4, CDC16, CDC23; the interaction is direct, ANAPC10; the interaction is direct and CDC26, during spermatogenesis. May interact with CDC20. Post-translationally, phosphorylated on Ser-76, Thr-234 and Ser-334 in response to calcium, which is a prerequisite for ubiquitination and proteasomal degradation. Ubiquitinated in response to calcium, which promotes proteasomal degradation. As to expression, expressed in the testis.

It participates in protein modification; protein ubiquitination. Its function is as follows. Required to establish and maintain the arrest of oocytes at the second meiotic metaphase until fertilization. Acts by inhibiting the anaphase-promoting complex/cyclosome (APC/C) ubiquitin ligase. Probably recognizes and binds to some phosphorylated proteins and promotes their ubiquitination and degradation. Plays a vital role in modulating the ubiquitilation of CCNB1 and CDK1 during gametogenesis. The polypeptide is F-box only protein 43 (FBXO43) (Homo sapiens (Human)).